The following is a 205-amino-acid chain: Imidazoleglycerol-phosphate dehydratase (205 aa).

The protein belongs to the imidazoleglycerol-phosphate dehydratase family.

The catalysed reaction is D-erythro-1-(imidazol-4-yl)glycerol 3-phosphate = 3-(imidazol-4-yl)-2-oxopropyl phosphate + H2O. It participates in amino-acid biosynthesis; L-histidine biosynthesis; L-histidine from 5-phospho-alpha-D-ribose 1-diphosphate: step 6/9. The sequence is that of Imidazoleglycerol-phosphate dehydratase (HIS3) from Phaffia rhodozyma (Yeast).